Reading from the N-terminus, the 104-residue chain is Flagellar hook-basal body complex protein FliE (104 aa).

This sequence belongs to the FliE family.

It localises to the bacterial flagellum basal body. In Salmonella newport (strain SL254), this protein is Flagellar hook-basal body complex protein FliE.